The chain runs to 158 residues: AP-1 complex subunit sigma-1A (158 aa).

S147 is subject to Phosphoserine.

Belongs to the adaptor complexes small subunit family. Adaptor protein complex 1 (AP-1) is a heterotetramer composed of two large adaptins (gamma-type subunit AP1G1 and beta-type subunit AP1B1), a medium adaptin (mu-type subunit AP1M1 or AP1M2) and a small adaptin (sigma-type subunit AP1S1 or AP1S2 or AP1S3). As to expression, widely expressed.

The protein resides in the golgi apparatus. The protein localises to the cytoplasmic vesicle membrane. Its subcellular location is the membrane. It localises to the clathrin-coated pit. Functionally, subunit of clathrin-associated adaptor protein complex 1 that plays a role in protein sorting in the late-Golgi/trans-Golgi network (TGN) and/or endosomes. The AP complexes mediate both the recruitment of clathrin to membranes and the recognition of sorting signals within the cytosolic tails of transmembrane cargo molecules. This chain is AP-1 complex subunit sigma-1A (AP1S1), found in Homo sapiens (Human).